The sequence spans 329 residues: Lipoyl synthase (329 aa).

[4Fe-4S] cluster is bound by residues C72, C77, C83, C98, C102, C105, and S313. Positions C83–E303 constitute a Radical SAM core domain.

It belongs to the radical SAM superfamily. Lipoyl synthase family. It depends on [4Fe-4S] cluster as a cofactor.

Its subcellular location is the cytoplasm. The catalysed reaction is [[Fe-S] cluster scaffold protein carrying a second [4Fe-4S](2+) cluster] + N(6)-octanoyl-L-lysyl-[protein] + 2 oxidized [2Fe-2S]-[ferredoxin] + 2 S-adenosyl-L-methionine + 4 H(+) = [[Fe-S] cluster scaffold protein] + N(6)-[(R)-dihydrolipoyl]-L-lysyl-[protein] + 4 Fe(3+) + 2 hydrogen sulfide + 2 5'-deoxyadenosine + 2 L-methionine + 2 reduced [2Fe-2S]-[ferredoxin]. It functions in the pathway protein modification; protein lipoylation via endogenous pathway; protein N(6)-(lipoyl)lysine from octanoyl-[acyl-carrier-protein]: step 2/2. Functionally, catalyzes the radical-mediated insertion of two sulfur atoms into the C-6 and C-8 positions of the octanoyl moiety bound to the lipoyl domains of lipoate-dependent enzymes, thereby converting the octanoylated domains into lipoylated derivatives. The polypeptide is Lipoyl synthase (Legionella pneumophila (strain Corby)).